Consider the following 91-residue polypeptide: Large ribosomal subunit protein bL27 (91 aa).

A disordered region spans residues 1–22; it reads MAHKKAGGSSRNGRDSAGRRLG.

Belongs to the bacterial ribosomal protein bL27 family.

The chain is Large ribosomal subunit protein bL27 from Methylocella silvestris (strain DSM 15510 / CIP 108128 / LMG 27833 / NCIMB 13906 / BL2).